The following is a 325-amino-acid chain: mRNA decay activator protein ZFP36 (325 aa).

Residues 1–15 are necessary for nuclear export; it reads MDLAAIYKSLLSLSP. Residues 1–98 are necessary and sufficient for the association with mRNA decay enzymes and mRNA decay activation; that stretch reads MDLAAIYKSL…PTSPTATPTT (98 aa). 2 necessary for localization of ARE-containing mRNAs to processing bodies (PBs) regions span residues 1–172 and 98–325; these read MDLA…DLAA and TSSR…SVSE. The segment covering 15 to 48 has biased composition (low complexity); that stretch reads PELPSDLGETESSTSWASSGPWSLSSSDSSLPEA. The tract at residues 15 to 101 is disordered; sequence PELPSDLGET…PTATPTTSSR (87 aa). Residue Ser58 is modified to Phosphoserine; by MAPKAPK2. Position 64 is a phosphoserine (Ser64). The P-P-P-P-G repeat unit spans residues 69–73; the sequence is PPPPG. Low complexity predominate over residues 75-101; sequence APLAPRPSSELSPSPTSPTATPTTSSR. Ser86 and Ser88 each carry phosphoserine. Thr90 carries the post-translational modification Phosphothreonine. Residue Ser91 is modified to Phosphoserine. The segment at 93 to 166 is necessary for nuclear localization; sequence TATPTTSSRY…GSRCHFIHNP (74 aa). Residues 95–171 are necessary for RNA-binding; sequence TPTTSSRYKT…FIHNPSEDLA (77 aa). 2 consecutive C3H1-type zinc fingers follow at residues 101–129 and 139–167; these read RYKTELCRTFSESGRCRYGAKCQFAHGLG and KYKTELCHKFYLQGRCPYGSRCHFIHNPS. The interval 101-192 is necessary for interaction with PABPN1; the sequence is RYKTELCRTF…ISFSGLPSGR (92 aa). A Phosphoserine modification is found at Ser167. The necessary for mRNA decay activation stretch occupies residues 172-325; that stretch reads APGHPHVLRQ…PIFNRISVSE (154 aa). Ser184 carries the phosphoserine; by MAPKAPK2 modification. 2 disordered regions span residues 185-248 and 260-325; these read FSGL…TPAC and VWGP…SVSE. Ser195 is subject to Phosphoserine. Residues 196 to 200 form a P-P-P-P-G repeat; the sequence is PPPAS. The segment covering 204–214 has biased composition (low complexity); it reads PSVPSWSFSPS. Position 216 is a phosphoserine (Ser216). Residues 217–222 form a P-P-P-P-G repeat; sequence PPPPPG. A Phosphoserine; by MAPK1; in vitro modification is found at Ser227. A phosphoserine mark is found at Ser275, Ser295, and Ser322. Positions 285-295 are enriched in low complexity; the sequence is SSGSSLGGSDS. Residues 311 to 325 form an interaction with CNOT1 region; the sequence is APRRLPIFNRISVSE.

Associates with cytoplasmic CCR4-NOT and PAN2-PAN3 deadenylase complexes to trigger ARE-containing mRNA deadenylation and decay processes. Part of a mRNA decay activation complex at least composed of poly(A)-specific exoribonucleases CNOT6, EXOSC2 and XRN1 and mRNA-decapping enzymes DCP1A and DCP2. Associates with the RNA exosome complex. Interacts (via phosphorylated form) with 14-3-3 proteins; these interactions promote exclusion of ZFP36 from cytoplasmic stress granules in response to arsenite treatment in a MAPKAPK2-dependent manner and does not prevent CCR4-NOT deadenylase complex recruitment or ZFP36-induced ARE-containing mRNA deadenylation and decay processes. Interacts with 14-3-3 proteins; these interactions occur in response to rapamycin in an Akt-dependent manner. Interacts with AGO2 and AGO4. Interacts (via C-terminus) with CNOT1; this interaction occurs in a RNA-independent manner and induces mRNA deadenylation. Interacts (via N-terminus) with CNOT6. Interacts with CNOT6L. Interacts (via C-terminus) with CNOT7; this interaction occurs in a RNA-independent manner, induces mRNA deadenylation and is inhibited in a phosphorylation MAPKAPK2-dependent manner. Interacts (via unphosphorylated form) with CNOT8; this interaction occurs in a RNA-independent manner and is inhibited in a phosphorylation MAPKAPK2-dependent manner. Interacts with DCP1A. Interacts (via N-terminus) with DCP2. Interacts with EDC3. Interacts (via N-terminus) with EXOSC2. Interacts with heat shock 70 kDa proteins. Interacts with KHSRP; this interaction increases upon cytokine-induced treatment. Interacts with MAP3K4; this interaction enhances the association with SH3KBP1/CIN85. Interacts with MAPKAPK2; this interaction occurs upon skeletal muscle satellite cell activation. Interacts with NCL. Interacts with NUP214; this interaction increases upon lipopolysaccharide (LPS) stimulation. Interacts with PABPC1; this interaction occurs in a RNA-dependent manner. Interacts (via hypophosphorylated form) with PABPN1 (via RRM domain and C-terminal arginine-rich region); this interaction occurs in the nucleus in a RNA-independent manner, decreases in presence of single-stranded poly(A) RNA-oligomer and in a p38 MAPK-dependent-manner and inhibits nuclear poly(A) tail synthesis. Interacts with PAN2. Interacts (via C3H1-type zinc finger domains) with PKM. Interacts (via C3H1-type zinc finger domains) with nuclear RNA poly(A) polymerase. Interacts with PPP2CA; this interaction occurs in LPS-stimulated cells and induces ZFP36 dephosphorylation, and hence may promote ARE-containing mRNAs decay. Interacts (via C-terminus) with PRR5L (via C-terminus); this interaction may accelerate ZFP36-mediated mRNA decay during stress. Interacts (via C-terminus) with SFN; this interaction occurs in a phosphorylation-dependent manner. Interacts (via extreme C-terminal region) with SH3KBP1/CIN85 (via SH3 domains); this interaction enhances MAP3K4-induced phosphorylation of ZFP36 at Ser-64 and Ser-91 and does not alter neither ZFP36 binding to ARE-containing transcripts nor TNF-alpha mRNA decay. Interacts with XRN1. Interacts (via C-terminus and Ser-184 phosphorylated form) with YWHAB; this interaction occurs in a p38/MAPKAPK2-dependent manner, increases cytoplasmic localization of ZFP36 and protects ZFP36 from Ser-184 dephosphorylation by serine/threonine phosphatase 2A, and hence may be crucial for stabilizing ARE-containing mRNAs. Interacts (via phosphorylated form) with YWHAE. Interacts (via C-terminus) with YWHAG; this interaction occurs in a phosphorylation-dependent manner. Interacts with YWHAH; this interaction occurs in a phosphorylation-dependent manner. Interacts with YWHAQ; this interaction occurs in a phosphorylation-dependent manner. Interacts with (via C-terminus) YWHAZ; this interaction occurs in a phosphorylation-dependent manner. Does not interact with SH3KBP1. Interacts (via P-P-P-P-G repeats) with GIGYF2; the interaction is direct. Phosphorylated. Phosphorylation at serine and/or threonine residues occurs in a p38 MAPK- and MAPKAPK2-dependent manner. Phosphorylated by MAPKAPK2 at Ser-58 and Ser-184; phosphorylation increases its stability and cytoplasmic localization, promotes binding to 14-3-3 adapter proteins and inhibits the recruitment of cytoplasmic CCR4-NOT and PAN2-PAN3 deadenylase complexes to the mRNA decay machinery, thereby inhibiting ZFP36-induced ARE-containing mRNA deadenylation and decay processes. Phosphorylation by MAPKAPK2 does not impair ARE-containing RNA-binding. Phosphorylated in a MAPKAPK2- and p38 MAPK-dependent manner upon skeletal muscle satellite cell activation; this phosphorylation inhibits ZFP36-mediated mRNA decay activity, and hence stabilizes MYOD1 mRNA. Phosphorylated by MAPK1 upon mitogen stimulation. Phosphorylated at Ser-64 and Ser-91; these phosphorylations increase in a SH3KBP1-dependent manner. Phosphorylated at serine and threonine residues in a pyruvate kinase PKM- and p38 MAPK-dependent manner. Phosphorylation at Ser-58 may participate in the PKM-mediated degradation of ZFP36 in a p38 MAPK-dependent manner. Dephosphorylated by serine/threonine phosphatase 2A at Ser-184. In terms of processing, ubiquitinated; pyruvate kinase (PKM)-dependent ubiquitination leads to proteasomal degradation through a p38 MAPK signaling pathway.

It is found in the nucleus. The protein localises to the cytoplasm. It localises to the cytoplasmic granule. The protein resides in the P-body. Zinc-finger RNA-binding protein that destabilizes numerous cytoplasmic AU-rich element (ARE)-containing mRNA transcripts by promoting their poly(A) tail removal or deadenylation, and hence provide a mechanism for attenuating protein synthesis. Acts as an 3'-untranslated region (UTR) ARE mRNA-binding adapter protein to communicate signaling events to the mRNA decay machinery. Recruits deadenylase CNOT7 (and probably the CCR4-NOT complex) via association with CNOT1, and hence promotes ARE-mediated mRNA deadenylation. Also functions by recruiting components of the cytoplasmic RNA decay machinery to the bound ARE-containing mRNAs. Self regulates by destabilizing its own mRNA. Binds to 3'-UTR ARE of numerous mRNAs. Also binds to ARE of its own mRNA. Plays a role in anti-inflammatory responses; suppresses tumor necrosis factor (TNF)-alpha production by stimulating ARE-mediated TNF-alpha mRNA decay and several other inflammatory ARE-containing mRNAs in interferon (IFN)- and/or lipopolysaccharide (LPS)-induced macrophages. Also plays a role in the regulation of dendritic cell maturation at the post-transcriptional level, and hence operates as part of a negative feedback loop to limit the inflammatory response. Promotes ARE-mediated mRNA decay of hypoxia-inducible factor HIF1A mRNA during the response of endothelial cells to hypoxia. Positively regulates early adipogenesis of preadipocytes by promoting ARE-mediated mRNA decay of immediate early genes (IEGs). Negatively regulates hematopoietic/erythroid cell differentiation by promoting ARE-mediated mRNA decay of the transcription factor STAT5B mRNA. Plays a role in maintaining skeletal muscle satellite cell quiescence by promoting ARE-mediated mRNA decay of the myogenic determination factor MYOD1 mRNA. Also associates with and regulates the expression of non-ARE-containing target mRNAs at the post-transcriptional level, such as MHC class I mRNAs. Participates in association with argonaute RISC catalytic components in the ARE-mediated mRNA decay mechanism; assists microRNA (miRNA) targeting ARE-containing mRNAs. May also play a role in the regulation of cytoplasmic mRNA decapping; enhances decapping of ARE-containing RNAs, in vitro. Involved in the delivery of target ARE-mRNAs to processing bodies (PBs). In addition to its cytosolic mRNA-decay function, affects nuclear pre-mRNA processing. Negatively regulates nuclear poly(A)-binding protein PABPN1-stimulated polyadenylation activity on ARE-containing pre-mRNA during LPS-stimulated macrophages. Also involved in the regulation of stress granule (SG) and P-body (PB) formation and fusion. Plays a role in the regulation of keratinocyte proliferation, differentiation and apoptosis. Plays a role as a tumor suppressor by inhibiting cell proliferation in breast cancer cells. This Ovis aries (Sheep) protein is mRNA decay activator protein ZFP36.